Consider the following 409-residue polypeptide: Peptidase T (409 aa).

Zn(2+) is bound at residue His-78. Residue Asp-80 is part of the active site. Residue Asp-140 coordinates Zn(2+). The Proton acceptor role is filled by Glu-173. Zn(2+) contacts are provided by Glu-174, Asp-196, and His-379.

This sequence belongs to the peptidase M20B family. Requires Zn(2+) as cofactor.

Its subcellular location is the cytoplasm. The catalysed reaction is Release of the N-terminal residue from a tripeptide.. Its function is as follows. Cleaves the N-terminal amino acid of tripeptides. In Salmonella heidelberg (strain SL476), this protein is Peptidase T.